A 382-amino-acid chain; its full sequence is Serine/threonine-protein kinase (382 aa).

The span at 1 to 10 (MENKQCDHLT) shows a compositional bias: basic and acidic residues. The segment at 1–75 (MENKQCDHLT…ASESDEDDDD (75 aa)) is disordered. Over residues 12–24 (WFSTTSDASESMD) the composition is skewed to polar residues. Residues 45 to 75 (ADEDLYSDISEGDLEYSDCDSASESDEDDDD) are compositionally biased toward acidic residues. In terms of domain architecture, Protein kinase spans 93–379 (YTVIKTLTPG…AEELLSYPMF (287 aa)). Residues 99–107 (LTPGSEGRV) and K122 each bind ATP. The active-site Proton acceptor is the D207.

Belongs to the protein kinase superfamily. Ser/Thr protein kinase family.

It catalyses the reaction L-seryl-[protein] + ATP = O-phospho-L-seryl-[protein] + ADP + H(+). The catalysed reaction is L-threonyl-[protein] + ATP = O-phospho-L-threonyl-[protein] + ADP + H(+). This chain is Serine/threonine-protein kinase (US2), found in Equus caballus (Horse).